The primary structure comprises 438 residues: Glutamyl-tRNA reductase (438 aa).

Residues 49-52 (TCNR), Ser-109, 114-116 (EGQ), and Gln-120 contribute to the substrate site. Cys-50 (nucleophile) is an active-site residue. Residue 198 to 203 (GAGRMS) participates in NADP(+) binding.

This sequence belongs to the glutamyl-tRNA reductase family. Homodimer.

The catalysed reaction is (S)-4-amino-5-oxopentanoate + tRNA(Glu) + NADP(+) = L-glutamyl-tRNA(Glu) + NADPH + H(+). Its pathway is porphyrin-containing compound metabolism; protoporphyrin-IX biosynthesis; 5-aminolevulinate from L-glutamyl-tRNA(Glu): step 1/2. The protein operates within porphyrin-containing compound metabolism; chlorophyll biosynthesis. Its function is as follows. Catalyzes the NADPH-dependent reduction of glutamyl-tRNA(Glu) to glutamate 1-semialdehyde (GSA). This is Glutamyl-tRNA reductase from Synechococcus sp. (strain WH7803).